The chain runs to 319 residues: Ankyrin repeat domain-containing protein 1 (319 aa).

The interval 46–65 (KTLPANSVKQGEEQRKSEKL) is disordered. Residues 53–89 (VKQGEEQRKSEKLREAELKKKKLEQRSKLENLEDLEI) adopt a coiled-coil conformation. Residues 55 to 65 (QGEEQRKSEKL) are compositionally biased toward basic and acidic residues. 5 ANK repeats span residues 152 to 181 (YKRTALHRACLEGHLAIVEKLMEAGAQIEF), 185 to 214 (LESTAIHWACRGGNADVLKLLLNKGAKISA), 218 to 247 (LLSTALHVAVRTGHYECAEHLIACEADLNA), 251 to 280 (EGDTPLHDAVRLNRYKMIRLLMTFGADLKV), and 284 to 315 (AGKTPMDLVLHWQSGTKAIFDSLKENAYKNSR).

In terms of assembly, interacts with TTN/titin and YBX1. In terms of tissue distribution, expressed in heart, cardiac muscle.

Its subcellular location is the nucleus. Functionally, may play an important role in endothelial cell activation. May act as a nuclear transcription factor that negatively regulates the expression of cardiac genes. The sequence is that of Ankyrin repeat domain-containing protein 1 (Ankrd1) from Mus musculus (Mouse).